The following is a 175-amino-acid chain: Ribosome maturation factor RimM (175 aa).

The 80-residue stretch at 96–175 folds into the PRC barrel domain; it reads EGDYYWHDLI…TITVDWDAGF (80 aa).

Belongs to the RimM family. In terms of assembly, binds ribosomal protein uS19.

The protein localises to the cytoplasm. An accessory protein needed during the final step in the assembly of 30S ribosomal subunit, possibly for assembly of the head region. Essential for efficient processing of 16S rRNA. May be needed both before and after RbfA during the maturation of 16S rRNA. It has affinity for free ribosomal 30S subunits but not for 70S ribosomes. This Actinobacillus pleuropneumoniae serotype 5b (strain L20) protein is Ribosome maturation factor RimM.